The sequence spans 80 residues: MTTNKNLDENISFEEALSELEEIVKKIDNGQETLEAAVNSFERGILLKNHCEKKLKEARLKIEKITKLADSTITLEEVEV.

The protein belongs to the XseB family. Heterooligomer composed of large and small subunits.

The protein localises to the cytoplasm. The catalysed reaction is Exonucleolytic cleavage in either 5'- to 3'- or 3'- to 5'-direction to yield nucleoside 5'-phosphates.. Its function is as follows. Bidirectionally degrades single-stranded DNA into large acid-insoluble oligonucleotides, which are then degraded further into small acid-soluble oligonucleotides. This Rickettsia bellii (strain OSU 85-389) protein is Exodeoxyribonuclease 7 small subunit.